Consider the following 405-residue polypeptide: Probable tRNA sulfurtransferase (405 aa).

Residues 60-165 (EGVIERLRHV…QDAIYLTNQV (106 aa)) form the THUMP domain. ATP is bound by residues 183 to 184 (ML), 208 to 209 (HF), Arg-265, Gly-287, and Gln-296.

The protein belongs to the ThiI family.

Its subcellular location is the cytoplasm. It catalyses the reaction [ThiI sulfur-carrier protein]-S-sulfanyl-L-cysteine + a uridine in tRNA + 2 reduced [2Fe-2S]-[ferredoxin] + ATP + H(+) = [ThiI sulfur-carrier protein]-L-cysteine + a 4-thiouridine in tRNA + 2 oxidized [2Fe-2S]-[ferredoxin] + AMP + diphosphate. The enzyme catalyses [ThiS sulfur-carrier protein]-C-terminal Gly-Gly-AMP + S-sulfanyl-L-cysteinyl-[cysteine desulfurase] + AH2 = [ThiS sulfur-carrier protein]-C-terminal-Gly-aminoethanethioate + L-cysteinyl-[cysteine desulfurase] + A + AMP + 2 H(+). The protein operates within cofactor biosynthesis; thiamine diphosphate biosynthesis. In terms of biological role, catalyzes the ATP-dependent transfer of a sulfur to tRNA to produce 4-thiouridine in position 8 of tRNAs, which functions as a near-UV photosensor. Also catalyzes the transfer of sulfur to the sulfur carrier protein ThiS, forming ThiS-thiocarboxylate. This is a step in the synthesis of thiazole, in the thiamine biosynthesis pathway. The sulfur is donated as persulfide by IscS. The polypeptide is Probable tRNA sulfurtransferase (Latilactobacillus sakei subsp. sakei (strain 23K) (Lactobacillus sakei subsp. sakei)).